A 93-amino-acid chain; its full sequence is UPF0728 protein C10orf53 homolog (93 aa).

This sequence belongs to the UPF0728 family.

In Mus musculus (Mouse), this protein is UPF0728 protein C10orf53 homolog.